The sequence spans 447 residues: Maintenance of mitochondrial morphology protein 1 (447 aa).

Residues 1 to 109 (MKSPNETSFT…VFSAWSFAQG (109 aa)) are Lumenal-facing. The chain crosses the membrane as a helical span at residues 110 to 130 (LVIGQLSVIVVLIFFIKFFIF). Topologically, residues 131 to 447 (SEGPIKTEGP…DDISMKSTDL (317 aa)) are cytoplasmic. In terms of domain architecture, SMP-LTD spans 208 to 421 (SPETLDWFNV…EPRFQFIKLP (214 aa)).

It belongs to the MMM1 family. As to quaternary structure, homodimer. Component of the ER-mitochondria encounter structure (ERMES) or MDM complex, composed of MMM1, MDM10, MDM12 and MDM34. An MMM1 homodimer associates with one molecule of MDM12 on each side in a pairwise head-to-tail manner, and the SMP-LTD domains of MMM1 and MDM12 generate a continuous hydrophobic tunnel for phospholipid trafficking.

Its subcellular location is the endoplasmic reticulum membrane. Component of the ERMES/MDM complex, which serves as a molecular tether to connect the endoplasmic reticulum (ER) and mitochondria. Components of this complex are involved in the control of mitochondrial shape and protein biogenesis, and function in nonvesicular lipid trafficking between the ER and mitochondria. The MDM12-MMM1 subcomplex functions in the major beta-barrel assembly pathway that is responsible for biogenesis of all outer membrane beta-barrel proteins, and acts in a late step after the SAM complex. The MDM10-MDM12-MMM1 subcomplex further acts in the TOM40-specific pathway after the action of the MDM12-MMM1 complex. Essential for establishing and maintaining the structure of mitochondria and maintenance of mtDNA nucleoids. The polypeptide is Maintenance of mitochondrial morphology protein 1 (Lachancea thermotolerans (strain ATCC 56472 / CBS 6340 / NRRL Y-8284) (Yeast)).